We begin with the raw amino-acid sequence, 129 residues long: Phosphoribosyl-AMP cyclohydrolase (129 aa).

D76 contributes to the Mg(2+) binding site. C77 is a binding site for Zn(2+). D78 and D80 together coordinate Mg(2+). Zn(2+) contacts are provided by C97 and C104.

Belongs to the PRA-CH family. In terms of assembly, homodimer. It depends on Mg(2+) as a cofactor. Zn(2+) serves as cofactor.

Its subcellular location is the cytoplasm. The enzyme catalyses 1-(5-phospho-beta-D-ribosyl)-5'-AMP + H2O = 1-(5-phospho-beta-D-ribosyl)-5-[(5-phospho-beta-D-ribosylamino)methylideneamino]imidazole-4-carboxamide. Its pathway is amino-acid biosynthesis; L-histidine biosynthesis; L-histidine from 5-phospho-alpha-D-ribose 1-diphosphate: step 3/9. Its function is as follows. Catalyzes the hydrolysis of the adenine ring of phosphoribosyl-AMP. The polypeptide is Phosphoribosyl-AMP cyclohydrolase (Polaromonas naphthalenivorans (strain CJ2)).